Here is a 390-residue protein sequence, read N- to C-terminus: LL-diaminopimelate aminotransferase 2 (390 aa).

Substrate-binding residues include Y13 and G38. Pyridoxal 5'-phosphate contacts are provided by residues Y67, S102–K103, Y127, N177, Y208, and S236–S238. The substrate site is built by K103, Y127, and N177. K239 carries the post-translational modification N6-(pyridoxal phosphate)lysine. R247 serves as a coordination point for pyridoxal 5'-phosphate. R365 lines the substrate pocket.

Belongs to the class-I pyridoxal-phosphate-dependent aminotransferase family. LL-diaminopimelate aminotransferase subfamily. In terms of assembly, homodimer. Pyridoxal 5'-phosphate is required as a cofactor.

It catalyses the reaction (2S,6S)-2,6-diaminopimelate + 2-oxoglutarate = (S)-2,3,4,5-tetrahydrodipicolinate + L-glutamate + H2O + H(+). The protein operates within amino-acid biosynthesis; L-lysine biosynthesis via DAP pathway; LL-2,6-diaminopimelate from (S)-tetrahydrodipicolinate (aminotransferase route): step 1/1. Functionally, involved in the synthesis of meso-diaminopimelate (m-DAP or DL-DAP), required for both lysine and peptidoglycan biosynthesis. Catalyzes the direct conversion of tetrahydrodipicolinate to LL-diaminopimelate. The sequence is that of LL-diaminopimelate aminotransferase 2 from Trichormus variabilis (strain ATCC 29413 / PCC 7937) (Anabaena variabilis).